Here is an 816-residue protein sequence, read N- to C-terminus: H(+)/Cl(-) exchange transporter 5 (816 aa).

The disordered stretch occupies residues 1–28 (MAMWQGAMDNRGFQQGSFNSFQSSSSDE). At 1-124 (MAMWQGAMDN…WALIHSVSDA (124 aa)) the chain is on the cytoplasmic side. Low complexity predominate over residues 12-25 (GFQQGSFNSFQSSS). Transmembrane regions (helical) follow at residues 125-162 (FSGW…ICTE) and 208-231 (VNYF…VKVF). The Selectivity filter part_1 signature appears at 237 to 241 (GSGIP). Serine 238 contributes to the chloride binding site. An intramembrane region (helical) is located at residues 240–247 (IPEIKTIL). Transmembrane regions (helical) follow at residues 256-275 (LGKW…VSSG) and 281-300 (EGPL…HCFN). A Selectivity filter part_2 motif is present at residues 279–283 (GKEGP). Intramembrane regions (helical) lie at residues 312-324 (VLSA…VSVA) and 328-336 (PIGGVLFSL). 5 consecutive transmembrane segments (helical) span residues 348 to 366 (LWRS…RSIN), 389 to 414 (LVPF…IAWC), 422 to 442 (LGKY…ILAF), 498 to 518 (MWQL…TFGM), and 523 to 542 (GLFI…LGVG). A Selectivity filter part_3 motif is present at residues 523–527 (GLFIP). Phenylalanine 525 contributes to the chloride binding site. Residues 570-584 (GLYAMVGAAACLGGV) constitute an intramembrane region (helical). An intramembrane region (note=Loop between two helices) is located at residues 585–587 (TRM). The helical intramembrane region spans 588–599 (TVSLVVIMFELT). Positions 600–604 (GGLEY) form an intramembrane region, note=Loop between two helices. Residues 605–622 (IVPLMAAAMTSKWVADAL) form a helical membrane-spanning segment. The Cytoplasmic portion of the chain corresponds to 623–816 (GREGIYDAHI…NQDPDSILFN (194 aa)). Tyrosine 628 provides a ligand contact to chloride. CBS domains lie at 656-720 (MKPR…ARKK) and 752-812 (ILDL…DPDS). ATP is bound by residues threonine 666, 687-689 (YSG), and 794-797 (TKKD).

Belongs to the chloride channel (TC 2.A.49) family. ClC-5/CLCN5 subfamily. In terms of assembly, interacts with NEDD4 and NEDD4L. Post-translationally, ubiquitinated by NEDD4L in the presence of albumin; which promotes endocytosis and proteasomal degradation.

The protein resides in the golgi apparatus membrane. It localises to the endosome membrane. Its subcellular location is the cell membrane. It catalyses the reaction 2 chloride(in) + H(+)(out) = 2 chloride(out) + H(+)(in). Proton-coupled chloride transporter. Functions as antiport system and exchanges chloride ions against protons. Important for normal acidification of the endosome lumen. May play an important role in renal tubular function. The CLC channel family contains both chloride channels and proton-coupled anion transporters that exchange chloride or another anion for protons. The absence of conserved gating glutamate residues is typical for family members that function as channels. The protein is H(+)/Cl(-) exchange transporter 5 (CLCN5) of Sus scrofa (Pig).